Consider the following 92-residue polypeptide: Small ribosomal subunit protein uS19 (92 aa).

The protein belongs to the universal ribosomal protein uS19 family.

In terms of biological role, protein S19 forms a complex with S13 that binds strongly to the 16S ribosomal RNA. This chain is Small ribosomal subunit protein uS19, found in Crocosphaera subtropica (strain ATCC 51142 / BH68) (Cyanothece sp. (strain ATCC 51142)).